Reading from the N-terminus, the 121-residue chain is MEKGFSVGWRIRTTAEFRRIYAARQRIIGRYYLLYYRENEIKHSRLGVVASKRNVRKAVWRNRVRRVVKETFRIRKKDLPAFDIVVVAKASSVEADNKELYECINKLFTQLERQSKRSSSV.

It belongs to the RnpA family. Consists of a catalytic RNA component (M1 or rnpB) and a protein subunit.

It carries out the reaction Endonucleolytic cleavage of RNA, removing 5'-extranucleotides from tRNA precursor.. Its function is as follows. RNaseP catalyzes the removal of the 5'-leader sequence from pre-tRNA to produce the mature 5'-terminus. It can also cleave other RNA substrates such as 4.5S RNA. The protein component plays an auxiliary but essential role in vivo by binding to the 5'-leader sequence and broadening the substrate specificity of the ribozyme. The sequence is that of Ribonuclease P protein component from Coxiella burnetii (strain Dugway 5J108-111).